The sequence spans 238 residues: Ribonuclease 3 (238 aa).

One can recognise an RNase III domain in the interval 4 to 130 (IQTLFQTLNI…LFGAIYLDLG (127 aa)). Glutamate 45 is a binding site for Mg(2+). Aspartate 49 is a catalytic residue. The Mg(2+) site is built by aspartate 116 and glutamate 119. Glutamate 119 is a catalytic residue. The DRBM domain occupies 154–222 (DFKTQLQEIV…AQQALSKVAK (69 aa)). The interval 215–238 (QALSKVAKPKDLLNNKGGKEKELQ) is disordered. Positions 222-238 (KPKDLLNNKGGKEKELQ) are enriched in basic and acidic residues.

It belongs to the ribonuclease III family. Homodimer. Mg(2+) serves as cofactor.

It localises to the cytoplasm. It catalyses the reaction Endonucleolytic cleavage to 5'-phosphomonoester.. Digests double-stranded RNA. Involved in the processing of primary rRNA transcript to yield the immediate precursors to the large and small rRNAs (23S and 16S). Processes some mRNAs, and tRNAs when they are encoded in the rRNA operon. Processes pre-crRNA and tracrRNA of type II CRISPR loci if present in the organism. This is Ribonuclease 3 from Onion yellows phytoplasma (strain OY-M).